A 144-amino-acid polypeptide reads, in one-letter code: Putative pre-16S rRNA nuclease (144 aa).

It belongs to the YqgF nuclease family.

It is found in the cytoplasm. Its function is as follows. Could be a nuclease involved in processing of the 5'-end of pre-16S rRNA. In Wigglesworthia glossinidia brevipalpis, this protein is Putative pre-16S rRNA nuclease.